Reading from the N-terminus, the 134-residue chain is L-ectoine synthase (134 aa).

The protein belongs to the ectoine synthase family.

It catalyses the reaction (2S)-4-acetamido-2-aminobutanoate = L-ectoine + H2O. It functions in the pathway amine and polyamine biosynthesis; ectoine biosynthesis; L-ectoine from L-aspartate 4-semialdehyde: step 3/3. In terms of biological role, catalyzes the circularization of gamma-N-acetyl-alpha,gamma-diaminobutyric acid (ADABA) to ectoine (1,4,5,6-tetrahydro-2-methyl-4-pyrimidine carboxylic acid), which is an excellent osmoprotectant. The chain is L-ectoine synthase from Thermobifida fusca (strain YX).